Here is a 1860-residue protein sequence, read N- to C-terminus: Golgi-specific brefeldin A-resistance guanine nucleotide exchange factor 1 (1860 aa).

Residues 1–211 are DCB; DCB:DCB domain and DCB:HUS domain interaction; it reads MVDKNIYIIQ…EPKNYVGTNM (211 aa). Residues 1 to 381 form an interaction with RAB1B region; the sequence is MVDKNIYIIQ…SVHDMDYVNP (381 aa). Disordered regions lie at residues 215–266 and 281–372; these read KMRA…GGMP and AASA…DSAS. A compositionally biased stretch (basic residues) spans 227–241; the sequence is WKKQKRSPRPPRHMT. 3 stretches are compositionally biased toward polar residues: residues 250 to 262, 290 to 301, and 335 to 351; these read PTPN…SNLT, TDSGLEFSSQTT, and DLQQ…SASV. Ser-350 and Ser-353 each carry phosphoserine. Phosphothreonine is present on Thr-508. The segment at 531–551 is HUS; DCB:HUS domain interaction; it reads RIPSFVTELYINYDCDYYCSN. Residues 620 to 631 are compositionally biased toward basic and acidic residues; the sequence is TREASNTERTAS. Residues 620–666 form a disordered region; it reads TREASNTERTASDGKAVGMASDIPGLHLPGGGRLPPEHGKSGCSDLE. Ser-663 bears the Phosphoserine mark. Residues 693–883 enclose the SEC7 domain; the sequence is ELIEIKNKKK…EDMYHAIKNE (191 aa). The interval 887–1371 is phosphatidylinositol-phosphate binding; required for translocation to the leading edge and for ARF1 activation upon GPCR signaling; sequence MPEEQTGLVR…PSRPGPSPLI (485 aa). Positions 1285-1297 are enriched in low complexity; sequence QATARADAPDAGA. The tract at residues 1285-1336 is disordered; sequence QATARADAPDAGAQSDSELPSYHQNDVSLDRGYTSDSEVYTDHGRPGKIHRS. Over residues 1298-1311 the composition is skewed to polar residues; it reads QSDSELPSYHQNDV. Position 1299 is a phosphoserine (Ser-1299). Tyr-1317 is subject to Phosphotyrosine. Ser-1319, Ser-1321, and Ser-1336 each carry phosphoserine. Position 1338 is a phosphothreonine; by AMPK (Thr-1338). Disordered stretches follow at residues 1351 to 1371, 1431 to 1484, and 1726 to 1809; these read GKDD…SPLI, CKSQ…DEGV, and PMPM…QPPL. Residues 1433–1447 are compositionally biased toward basic and acidic residues; sequence SQEKRGKSHKYDSKG. Positions 1465 to 1474 are enriched in polar residues; sequence TSSQHASRGG. Ser-1476, Ser-1774, and Ser-1785 each carry phosphoserine. The segment covering 1775–1792 has biased composition (low complexity); that stretch reads PRAASSSSPGSPVASSPS.

Can form homodimers and probably homotetramers. Interacts with COPG1; the interaction is independent of ARF1 activation. Interacts with ARF1, ARF3, ARF4 and ARF5. Interacts with RAB1B (GTP-bound form); required for GBF1 membrane association. Interacts with GGA1, GGA2 and GGA3. Interacts with USO1. Interacts (via SEC7 domain) with PNPLA2 (via C-terminus); the interaction is direct. Interacts with ARMH3. In terms of assembly, (Microbial infection) Interacts with poliovirus protein 3A. Post-translationally, AMPK-mediated phosphorylation at Thr-1338 is induced by 2-deoxyglucose (2-DG) and AICA ribonucleotide, and occurs during mitosis leading to membrane disassociation and inactivation of ARF1 during mitosis. Ubiquitous.

It localises to the golgi apparatus. Its subcellular location is the cis-Golgi network. The protein localises to the endoplasmic reticulum-Golgi intermediate compartment. It is found in the trans-Golgi network. The protein resides in the cytoplasm. It localises to the lipid droplet. Its subcellular location is the membrane. With respect to regulation, inhibited by brefeldin A (BFA). Inhibited by golgicide A (GCA). In terms of biological role, guanine-nucleotide exchange factor (GEF) for members of the Arf family of small GTPases involved in trafficking in the early secretory pathway; its GEF activity initiates the coating of nascent vesicles via the localized generation of activated ARFs through replacement of GDP with GTP. Recruitment to cis-Golgi membranes requires membrane association of Arf-GDP and can be regulated by ARF1, ARF3, ARF4 and ARF5. Involved in the recruitment of the COPI coat complex to the endoplasmic reticulum exit sites (ERES), and the endoplasmic reticulum-Golgi intermediate (ERGIC) and cis-Golgi compartments which implicates ARF1 activation. Involved in COPI vesicle-dependent retrograde transport from the ERGIC and cis-Golgi compartments to the endoplasmic reticulum (ER). Involved in the trans-Golgi network recruitment of GGA1, GGA2, GGA3, BIG1, BIG2, and the AP-1 adaptor protein complex related to chlathrin-dependent transport; the function requires its GEF activity (probably at least in part on ARF4 and ARF5). Has GEF activity towards ARF1. Has in vitro GEF activity towards ARF5. Involved in the processing of PSAP. Required for the assembly of the Golgi apparatus. The AMPK-phosphorylated form is involved in Golgi disassembly during mitotis and under stress conditions. May be involved in the COPI vesicle-dependent recruitment of PNPLA2 to lipid droplets; however, this function is under debate. In neutrophils, involved in G protein-coupled receptor (GPCR)-mediated chemotaxis und superoxide production. Proposed to be recruited by phosphatidylinositol-phosphates generated upon GPCR stimulation to the leading edge where it recruits and activates ARF1, and is involved in recruitment of GIT2 and the NADPH oxidase complex. Plays a role in maintaining mitochondrial morphology. The protein is Golgi-specific brefeldin A-resistance guanine nucleotide exchange factor 1 (GBF1) of Homo sapiens (Human).